Here is a 1047-residue protein sequence, read N- to C-terminus: FACT complex subunit SPT16 (1047 aa).

Position 2 is an N-acetylalanine (alanine 2). Lysine 139 carries the N6-acetyllysine modification. A Phosphoserine modification is found at serine 188. An N6-acetyllysine mark is found at lysine 196 and lysine 223. Residue serine 455 is modified to Phosphoserine. Residues 465 to 507 (RNEMTAEEKRRAHQKELAAQLNEEAKRRLTEQKGEQQIQKARK) adopt a coiled-coil conformation. A disordered region spans residues 491–518 (RRLTEQKGEQQIQKARKSNVSYKNPSLM). Residue lysine 497 forms a Glycyl lysine isopeptide (Lys-Gly) (interchain with G-Cter in SUMO2) linkage. Residues 499 to 514 (EQQIQKARKSNVSYKN) show a composition bias toward polar residues. Residue serine 508 is modified to Phosphoserine. Lysine 513 is modified (N6-acetyllysine; alternate). A Glycyl lysine isopeptide (Lys-Gly) (interchain with G-Cter in SUMO2); alternate cross-link involves residue lysine 513. Residue lysine 647 forms a Glycyl lysine isopeptide (Lys-Gly) (interchain with G-Cter in SUMO2) linkage. Phosphoserine occurs at positions 650 and 658. Residues lysine 732 and lysine 786 each carry the N6-acetyllysine modification. At threonine 903 the chain carries Phosphothreonine. Lysine 904 bears the N6-acetyllysine mark. The segment at 918–1047 (EQGGWSFLEP…SSAPPKKKRK (130 aa)) is disordered. Acidic residues predominate over residues 927 to 973 (PEGEGSDAEDGDSESEIEDETFNPSEDDYEEEEEDSDEDYSSEAEES). Residues serine 979, serine 982, serine 986, and serine 1015 each carry the phosphoserine modification. A compositionally biased stretch (basic and acidic residues) spans 985–1005 (ESGKDWDELEEEARKADRESR). Low complexity predominate over residues 1024–1039 (VHSSGRGSNRGSRHSS).

Belongs to the peptidase M24 family. SPT16 subfamily. Interacts with MYOG (via C-terminal region). Component of the FACT complex, a stable heterodimer of SSRP1 and SUPT16H. Also a component of a CK2-SPT16-SSRP1 complex which forms following UV irradiation, composed of SSRP1, SUPT16H, CSNK2A1, CSNK2A2 and CSNK2B. Interacts with NEK9. Binds to histone H2A-H2B. Identified in a centromere complex containing histones H2A, H2B and H4, and at least CENPA, CENPB, CENPC, CENPT, CENPN, HJURP, SUPT16H, SSRP1 and RSF1. Interacts with GTF2E2. In terms of processing, ADP-ribosylated. ADP-ribosylation by PARP1 is induced by genotoxic stress and correlates with dissociation of FACT from chromatin. Widely expressed. Expressed in brain, liver, heart, kidneys, lungs, spleen, thymus, ovary, and testes, with highest levels of expression observed in thymus.

It localises to the nucleus. The protein resides in the chromosome. Functionally, component of the FACT complex, a general chromatin factor that acts to reorganize nucleosomes. The FACT complex is involved in multiple processes that require DNA as a template such as mRNA elongation, DNA replication and DNA repair. During transcription elongation the FACT complex acts as a histone chaperone that both destabilizes and restores nucleosomal structure. It facilitates the passage of RNA polymerase II and transcription by promoting the dissociation of one histone H2A-H2B dimer from the nucleosome, then subsequently promotes the reestablishment of the nucleosome following the passage of RNA polymerase II. The FACT complex is probably also involved in phosphorylation of 'Ser-392' of p53/TP53 via its association with CK2 (casein kinase II). The chain is FACT complex subunit SPT16 (Supt16h) from Mus musculus (Mouse).